Consider the following 245-residue polypeptide: MDAGVWYRSLPRFTRYWLTATVVLSMLCRFDVIPLHWLHLDRSAVFSKLQLWRCMTSLFVFPISSNTAFHFLINCFFIVQYSSKLEKDQYSRSPADYLYLLIVSAVLANIGGMIFNVYFLMDTLVLAITYIWCQLNKDVTVSFWFGTRFKAMYLPWVLAAFEFIFHFSLASLVGIFVGHVYYFFKFQYSQDLGGTPLLETPQFLKRLVPDVSGGFGGFGLPPESRAPPRQATESPWGRGMTLGRN.

Topologically, residues 1–17 (MDAGVWYRSLPRFTRYW) are cytoplasmic. Residues 18 to 38 (LTATVVLSMLCRFDVIPLHWL) form a helical membrane-spanning segment. The Lumenal segment spans residues 39–58 (HLDRSAVFSKLQLWRCMTSL). A helical transmembrane segment spans residues 59–79 (FVFPISSNTAFHFLINCFFIV). Topologically, residues 80-99 (QYSSKLEKDQYSRSPADYLY) are cytoplasmic. Residues 100-120 (LLIVSAVLANIGGMIFNVYFL) form a helical membrane-spanning segment. The Lumenal segment spans residues 121–156 (MDTLVLAITYIWCQLNKDVTVSFWFGTRFKAMYLPW). The helical transmembrane segment at 157 to 177 (VLAAFEFIFHFSLASLVGIFV) threads the bilayer. The Cytoplasmic portion of the chain corresponds to 178-245 (GHVYYFFKFQ…WGRGMTLGRN (68 aa)). The tract at residues 218-245 (FGLPPESRAPPRQATESPWGRGMTLGRN) is disordered.

This sequence belongs to the derlin family.

The protein resides in the endoplasmic reticulum membrane. Its function is as follows. May be involved in the degradation process of specific misfolded endoplasmic reticulum (ER) luminal proteins. May also involved in endoplasmic reticulum stress-induced pre-emptive quality control, a mechanism that selectively attenuates the translocation of newly synthesized proteins into the endoplasmic reticulum and reroutes them to the cytosol for proteasomal degradation. The polypeptide is Derlin-1 (Drosophila melanogaster (Fruit fly)).